The chain runs to 264 residues: Diphthine synthase (264 aa).

S-adenosyl-L-methionine is bound by residues L10, D87, V90, 115–116, L166, A209, and H234; that span reads SI.

This sequence belongs to the diphthine synthase family. In terms of assembly, homodimer.

The enzyme catalyses 2-[(3S)-amino-3-carboxypropyl]-L-histidyl-[translation elongation factor 2] + 3 S-adenosyl-L-methionine = diphthine-[translation elongation factor 2] + 3 S-adenosyl-L-homocysteine + 3 H(+). It participates in protein modification; peptidyl-diphthamide biosynthesis. In terms of biological role, S-adenosyl-L-methionine-dependent methyltransferase that catalyzes the trimethylation of the amino group of the modified target histidine residue in translation elongation factor 2 (EF-2), to form an intermediate called diphthine. The three successive methylation reactions represent the second step of diphthamide biosynthesis. The sequence is that of Diphthine synthase from Thermococcus kodakarensis (strain ATCC BAA-918 / JCM 12380 / KOD1) (Pyrococcus kodakaraensis (strain KOD1)).